Here is a 216-residue protein sequence, read N- to C-terminus: Pyrophosphatase PpaX (216 aa).

Asp-9 functions as the Nucleophile in the catalytic mechanism.

This sequence belongs to the HAD-like hydrolase superfamily. PpaX family. The cofactor is Mg(2+).

It carries out the reaction diphosphate + H2O = 2 phosphate + H(+). Its function is as follows. Hydrolyzes pyrophosphate formed during P-Ser-HPr dephosphorylation by HPrK/P. Might play a role in controlling the intracellular pyrophosphate pool. This chain is Pyrophosphatase PpaX, found in Bacillus anthracis (strain A0248).